Consider the following 854-residue polypeptide: Patatin-like phospholipase domain-containing protein CHGG_02900 (854 aa).

Disordered regions lie at residues 1-29, 58-138, and 159-186; these read MAGPGYDRVDSKDDEPPNIQIPSRTYGFP, LSAP…PPLS, and QRRVARAKTAPQSSSRNDKKKKRARSKD. Residues 96–116 show a composition bias toward basic and acidic residues; it reads DLARRPESSGVGFHDEDRTAR. A compositionally biased stretch (low complexity) spans 119-132; sequence PAGAATAAAAGVAT. A helical transmembrane segment spans residues 199 to 219; that stretch reads WPLLGVVTCWLVGLSVVHVLA. One can recognise a PNPLA domain in the interval 387–578; sequence LCLSGGATFA…RTDIPIKALN (192 aa). The GXSXG motif lies at 418-422; it reads GTSGG. The active-site Nucleophile is the Ser-420. Asp-565 (proton acceptor) is an active-site residue. Disordered regions lie at residues 724-776 and 791-830; these read RENR…SILS and RGGIGSGETESEDETSDLDADFYEGITYDGGDDDAGLEFG. The span at 729–751 shows a compositional bias: gly residues; that stretch reads GGGLGDGGVGSSGGAGGGAGGGQ. Residues 752 to 761 show a composition bias toward low complexity; it reads AEAVAGQAAG. Residues 799-812 show a composition bias toward acidic residues; sequence TESEDETSDLDADF.

This sequence belongs to the PLPL family.

Its subcellular location is the membrane. In terms of biological role, probable lipid hydrolase. This is Patatin-like phospholipase domain-containing protein CHGG_02900 from Chaetomium globosum (strain ATCC 6205 / CBS 148.51 / DSM 1962 / NBRC 6347 / NRRL 1970) (Soil fungus).